We begin with the raw amino-acid sequence, 424 residues long: Serine--tRNA ligase (424 aa).

231-233 (TAE) lines the L-serine pocket. ATP is bound by residues 262 to 264 (RRE) and Val-278. Glu-285 contributes to the L-serine binding site. 349–352 (EVSS) provides a ligand contact to ATP. Ser-384 contributes to the L-serine binding site.

Belongs to the class-II aminoacyl-tRNA synthetase family. Type-1 seryl-tRNA synthetase subfamily. As to quaternary structure, homodimer. The tRNA molecule binds across the dimer.

It is found in the cytoplasm. It catalyses the reaction tRNA(Ser) + L-serine + ATP = L-seryl-tRNA(Ser) + AMP + diphosphate + H(+). The catalysed reaction is tRNA(Sec) + L-serine + ATP = L-seryl-tRNA(Sec) + AMP + diphosphate + H(+). Its pathway is aminoacyl-tRNA biosynthesis; selenocysteinyl-tRNA(Sec) biosynthesis; L-seryl-tRNA(Sec) from L-serine and tRNA(Sec): step 1/1. Catalyzes the attachment of serine to tRNA(Ser). Is also able to aminoacylate tRNA(Sec) with serine, to form the misacylated tRNA L-seryl-tRNA(Sec), which will be further converted into selenocysteinyl-tRNA(Sec). This chain is Serine--tRNA ligase, found in Chlamydia abortus (strain DSM 27085 / S26/3) (Chlamydophila abortus).